Consider the following 354-residue polypeptide: UDP-N-acetylglucosamine--N-acetylmuramyl-(pentapeptide) pyrophosphoryl-undecaprenol N-acetylglucosamine transferase (354 aa).

UDP-N-acetyl-alpha-D-glucosamine is bound by residues 11–13, Arg164, Ser194, and Gln289; that span reads TAG.

It belongs to the glycosyltransferase 28 family. MurG subfamily.

The protein resides in the cell membrane. It carries out the reaction di-trans,octa-cis-undecaprenyl diphospho-N-acetyl-alpha-D-muramoyl-L-alanyl-D-glutamyl-meso-2,6-diaminopimeloyl-D-alanyl-D-alanine + UDP-N-acetyl-alpha-D-glucosamine = di-trans,octa-cis-undecaprenyl diphospho-[N-acetyl-alpha-D-glucosaminyl-(1-&gt;4)]-N-acetyl-alpha-D-muramoyl-L-alanyl-D-glutamyl-meso-2,6-diaminopimeloyl-D-alanyl-D-alanine + UDP + H(+). The protein operates within cell wall biogenesis; peptidoglycan biosynthesis. Cell wall formation. Catalyzes the transfer of a GlcNAc subunit on undecaprenyl-pyrophosphoryl-MurNAc-pentapeptide (lipid intermediate I) to form undecaprenyl-pyrophosphoryl-MurNAc-(pentapeptide)GlcNAc (lipid intermediate II). This is UDP-N-acetylglucosamine--N-acetylmuramyl-(pentapeptide) pyrophosphoryl-undecaprenol N-acetylglucosamine transferase from Clostridium botulinum (strain ATCC 19397 / Type A).